Here is a 160-residue protein sequence, read N- to C-terminus: General odorant-binding protein 2 (160 aa).

Positions 1–20 (MFSFLILVFVASVADSVIGT) are cleaved as a signal peptide. 3 disulfides stabilise this stretch: Cys-38–Cys-73, Cys-69–Cys-127, and Cys-116–Cys-136.

It belongs to the PBP/GOBP family. As to quaternary structure, homodimer. Detected in antenna (at protein level). Expressed at high levels in antenna.

In terms of biological role, present in the aqueous fluid surrounding olfactory sensory dendrites and are thought to aid in the capture and transport of hydrophobic odorants into and through this fluid. In Bombyx mori (Silk moth), this protein is General odorant-binding protein 2.